Reading from the N-terminus, the 109-residue chain is Nucleoid-associated protein APL_0075 (109 aa).

Residues methionine 1 to methionine 21 are disordered. Positions leucine 10–glutamate 19 are enriched in low complexity.

The protein belongs to the YbaB/EbfC family. As to quaternary structure, homodimer.

It is found in the cytoplasm. Its subcellular location is the nucleoid. Binds to DNA and alters its conformation. May be involved in regulation of gene expression, nucleoid organization and DNA protection. The protein is Nucleoid-associated protein APL_0075 of Actinobacillus pleuropneumoniae serotype 5b (strain L20).